Consider the following 112-residue polypeptide: Type III inner-rod protein PscI (112 aa).

Belongs to the YscI/HrpB family. As to quaternary structure, homomultimer (through its C-terminal region).

Its function is as follows. Component of the type III secretion (T3S) injectisome that translocates effector toxins into host cells, facilitating the establishment and dissemination of infection. Polymerizes into flexible and regularly twisted fibrils and plays an essential role in needle assembly. The protein is Type III inner-rod protein PscI (pscI) of Pseudomonas aeruginosa (strain ATCC 15692 / DSM 22644 / CIP 104116 / JCM 14847 / LMG 12228 / 1C / PRS 101 / PAO1).